An 872-amino-acid polypeptide reads, in one-letter code: DNA mismatch repair protein MutS (872 aa).

An ATP-binding site is contributed by Gly623–Ser630.

This sequence belongs to the DNA mismatch repair MutS family.

In terms of biological role, this protein is involved in the repair of mismatches in DNA. It is possible that it carries out the mismatch recognition step. This protein has a weak ATPase activity. This is DNA mismatch repair protein MutS from Trichlorobacter lovleyi (strain ATCC BAA-1151 / DSM 17278 / SZ) (Geobacter lovleyi).